Consider the following 205-residue polypeptide: Probable inactive peroxygenase-like protein (205 aa).

The short motif at P79–P88 is the Proline-knot element. Residue S183 is modified to Phosphoserine.

It belongs to the caleosin family.

Its subcellular location is the lipid droplet. The polypeptide is Probable inactive peroxygenase-like protein (Arabidopsis thaliana (Mouse-ear cress)).